Reading from the N-terminus, the 576-residue chain is CDPK-related kinase 1 (576 aa).

The disordered stretch occupies residues 1–39 (MGICHGKPVEQQSKSLPVSGETNEAPTNSQPPAKSSGFP). G2 carries N-myristoyl glycine lipidation. The span at 10–33 (EQQSKSLPVSGETNEAPTNSQPPA) shows a compositional bias: polar residues. One can recognise a Protein kinase domain in the interval 123-385 (YEIDGEVGRG…AAQALCHPWL (263 aa)). Residues 129–137 (VGRGHFGYT) and K155 each bind ATP. D251 serves as the catalytic Proton acceptor. S291 bears the Phosphoserine mark. Position 333 is a phosphoserine; by CPK1 and CPK34 (S333). Positions 390 to 420 (ELKIPSDMIIYKLVKVYIMSTSLRKSALAAL) are autoinhibitory domain. The tract at residues 409–429 (STSLRKSALAALAKTLTVPQL) is calmodulin binding (CaMBD). EF-hand domains follow at residues 427–463 (PQLA…STDA), 464–499 (MKDS…VYQL), 500–539 (EAME…GPSV), and 542–571 (HVVL…VSSR). Ca(2+) is bound by residues S442, N444, Y446, K483, E488, D519, N521, E528, D553, and K555. S557 bears the Phosphoserine mark.

Belongs to the protein kinase superfamily. Ser/Thr protein kinase family. CDPK subfamily. As to quaternary structure, binds calmodulin (CaM) in a calcium-dependent manner. Interacts with HSFA1A. Autophosphorylated.

It localises to the membrane. The catalysed reaction is L-seryl-[protein] + ATP = O-phospho-L-seryl-[protein] + ADP + H(+). The enzyme catalyses L-threonyl-[protein] + ATP = O-phospho-L-threonyl-[protein] + ADP + H(+). Activated by calcium and calmodulin. Autophosphorylation may play an important role in the regulation of the kinase activity. Functionally, may play a role in signal transduction pathways that involve calcium as a second messenger. Serine/threonine kinase that phosphorylates histone H3. Confers thermotolerance; involved in the heat-shock-mediated calmodulin-dependent signal transduction leading to the activation of heat-shock transcription factors (HSFs); phosphorylates HSFA1A. This Arabidopsis thaliana (Mouse-ear cress) protein is CDPK-related kinase 1 (CRK1).